We begin with the raw amino-acid sequence, 525 residues long: GMP synthase [glutamine-hydrolyzing] (525 aa).

The 199-residue stretch at 9–207 (RILILDFGSQ…VRDICQCEAL (199 aa)) folds into the Glutamine amidotransferase type-1 domain. Cys-86 acts as the Nucleophile in catalysis. Catalysis depends on residues His-181 and Glu-183. In terms of domain architecture, GMPS ATP-PPase spans 208 to 400 (WTPAKIIDDA…LGLPYDMLYR (193 aa)). An ATP-binding site is contributed by 235-241 (SGGVDSS).

Homodimer.

It carries out the reaction XMP + L-glutamine + ATP + H2O = GMP + L-glutamate + AMP + diphosphate + 2 H(+). Its pathway is purine metabolism; GMP biosynthesis; GMP from XMP (L-Gln route): step 1/1. Its function is as follows. Catalyzes the synthesis of GMP from XMP. This chain is GMP synthase [glutamine-hydrolyzing], found in Enterobacter sp. (strain 638).